The primary structure comprises 239 residues: Pyridoxine 5'-phosphate synthase (239 aa).

N7 contacts 3-amino-2-oxopropyl phosphate. 9-10 (DH) lines the 1-deoxy-D-xylulose 5-phosphate pocket. R18 is a binding site for 3-amino-2-oxopropyl phosphate. H43 acts as the Proton acceptor in catalysis. R45 and H50 together coordinate 1-deoxy-D-xylulose 5-phosphate. E70 acts as the Proton acceptor in catalysis. T100 contributes to the 1-deoxy-D-xylulose 5-phosphate binding site. H191 acts as the Proton donor in catalysis. Residues G192 and 213–214 (GH) contribute to the 3-amino-2-oxopropyl phosphate site.

Belongs to the PNP synthase family. As to quaternary structure, homooctamer; tetramer of dimers.

The protein resides in the cytoplasm. The enzyme catalyses 3-amino-2-oxopropyl phosphate + 1-deoxy-D-xylulose 5-phosphate = pyridoxine 5'-phosphate + phosphate + 2 H2O + H(+). It functions in the pathway cofactor biosynthesis; pyridoxine 5'-phosphate biosynthesis; pyridoxine 5'-phosphate from D-erythrose 4-phosphate: step 5/5. Functionally, catalyzes the complicated ring closure reaction between the two acyclic compounds 1-deoxy-D-xylulose-5-phosphate (DXP) and 3-amino-2-oxopropyl phosphate (1-amino-acetone-3-phosphate or AAP) to form pyridoxine 5'-phosphate (PNP) and inorganic phosphate. The polypeptide is Pyridoxine 5'-phosphate synthase (Syntrophotalea carbinolica (strain DSM 2380 / NBRC 103641 / GraBd1) (Pelobacter carbinolicus)).